Reading from the N-terminus, the 967-residue chain is Disks large homolog 1 (967 aa).

One can recognise an L27 domain in the interval 5 to 65 (SSEKAHKAIE…LYEQTLLSER (61 aa)). The PDZ 1 domain occupies 202 to 289 (NIVLEKGHTG…VVSLSLKRRK (88 aa)). The segment at 324–351 (IHSPSAPIHPPPPPPVHHGSLSQLSVGQ) is disordered. A compositionally biased stretch (pro residues) spans 330-339 (PIHPPPPPPV). PDZ domains lie at 361–448 (VIDL…QQGT) and 510–591 (PVQL…QYRP). The SH3 domain maps to 619–690 (RKSEYVRALF…PSKKRVEKRE (72 aa)). Positions 673–723 (EETAEGVIPSKKRVEKRERLRRKQVNFNSGSQSLGRNSSTTGLENRRGSRS) are disordered. Basic residues predominate over residues 682-696 (SKKRVEKRERLRRKQ). Over residues 697-715 (VNFNSGSQSLGRNSSTTGL) the composition is skewed to polar residues. Residues 769–955 (VRPVIILGAL…VLSKVYSIIS (187 aa)) form the Guanylate kinase-like domain.

It belongs to the MAGUK family. Homooligomerizes; requires L27 domain. Interacts (via L27 domain) with ajm-1; the interaction regulates ajm-1 apical junction location. In terms of tissue distribution, expressed in the apical junctions in the hypodermis. Expressed in epithelial cells in the reproductive system including vulva, uterus and spermatheca.

It is found in the membrane. The protein resides in the apical cell membrane. The protein localises to the cell junction. Its subcellular location is the adherens junction. It localises to the lateral cell membrane. It is found in the cytoplasm. Essential multidomain scaffolding protein required for normal development. Recruits channels, receptors and signaling molecules to discrete plasma membrane domains in polarized cells. Required for proper embryonic elongation. Acts upstream of ajm-1 and becomes localized to apical junctions independently of ajm-1. With let-413, cooperatively regulates ajm-1 localization to apical junctions and the establishment of newly formed epithelia. Plays a role in assembling the adherens junction by clustering ajm-1 and other proteins, to form electron-dense structures; may form a compartment distinct to that of hmp-1 and associated proteins. Plays a role in the directed outgrowth of seam cells, towards neighboring seam cells, during larval development. The sequence is that of Disks large homolog 1 from Caenorhabditis elegans.